We begin with the raw amino-acid sequence, 263 residues long: Phosphatidylglycerol--prolipoprotein diacylglyceryl transferase (263 aa).

Helical transmembrane passes span 16–36 (LAVS…WFYA), 55–75 (FVTY…ILLY), 92–112 (EGGM…YIFC), and 117–137 (LNFL…LFFG). Arg138 is a binding site for a 1,2-diacyl-sn-glycero-3-phospho-(1'-sn-glycerol). 3 helical membrane-spanning segments follow: residues 172 to 192 (QLYE…YAVF), 201 to 221 (GLNS…IEIF), and 234 to 254 (SLTM…YLII).

Belongs to the Lgt family.

It is found in the cell inner membrane. It carries out the reaction L-cysteinyl-[prolipoprotein] + a 1,2-diacyl-sn-glycero-3-phospho-(1'-sn-glycerol) = an S-1,2-diacyl-sn-glyceryl-L-cysteinyl-[prolipoprotein] + sn-glycerol 1-phosphate + H(+). It participates in protein modification; lipoprotein biosynthesis (diacylglyceryl transfer). Catalyzes the transfer of the diacylglyceryl group from phosphatidylglycerol to the sulfhydryl group of the N-terminal cysteine of a prolipoprotein, the first step in the formation of mature lipoproteins. In Rickettsia bellii (strain OSU 85-389), this protein is Phosphatidylglycerol--prolipoprotein diacylglyceryl transferase.